A 1898-amino-acid chain; its full sequence is Protein NYNRIN (1898 aa).

Disordered regions lie at residues 289-315 (SNNQ…STNH), 424-450 (LPSA…CPRP), 467-533 (DVKD…TDQS), 618-691 (EPTT…TDAG), and 711-731 (VSLL…SGTL). The span at 618–627 (EPTTPKTPQA) shows a compositional bias: polar residues. Residues 649-672 (PAATVSKAPAASKAPAAPKVPVTP) are compositionally biased toward low complexity. The RNase NYN domain maps to 792-942 (LRRVVIDGSS…LGRDGPTLDE (151 aa)). Residues 968 to 1019 (SASVTELSDDADSGPLESLPNMEEVREEKEERQDEEQRQGQGTQKAAEEDDL) form a disordered region. Residues 990–1005 (EEVREEKEERQDEEQR) show a composition bias toward basic and acidic residues. The region spanning 1304 to 1450 (LSTFVCIHMS…VDTLAKQGAQ (147 aa)) is the RNase H type-1 domain. The next 2 helical transmembrane spans lie at 1372-1392 (VVFL…LPLW) and 1408-1428 (PSLL…PFIY). The 166-residue stretch at 1609 to 1774 (RSTAPWSNLQ…ESRLTEPLWW (166 aa)) folds into the Integrase catalytic domain.

The protein localises to the membrane. The protein is Protein NYNRIN (NYNRIN) of Homo sapiens (Human).